Here is a 307-residue protein sequence, read N- to C-terminus: Elongation factor Ts (307 aa).

An involved in Mg(2+) ion dislocation from EF-Tu region spans residues 79-82; the sequence is TDFV.

The protein belongs to the EF-Ts family.

The protein resides in the cytoplasm. Functionally, associates with the EF-Tu.GDP complex and induces the exchange of GDP to GTP. It remains bound to the aminoacyl-tRNA.EF-Tu.GTP complex up to the GTP hydrolysis stage on the ribosome. This chain is Elongation factor Ts, found in Sinorhizobium medicae (strain WSM419) (Ensifer medicae).